A 275-amino-acid polypeptide reads, in one-letter code: 4-hydroxy-3-methylbut-2-enyl diphosphate reductase (275 aa).

C12 contacts [4Fe-4S] cluster. (2E)-4-hydroxy-3-methylbut-2-enyl diphosphate-binding residues include H40 and H70. 2 residues coordinate dimethylallyl diphosphate: H40 and H70. Positions 40 and 70 each coordinate isopentenyl diphosphate. Position 92 (C92) interacts with [4Fe-4S] cluster. H119 is a binding site for (2E)-4-hydroxy-3-methylbut-2-enyl diphosphate. A dimethylallyl diphosphate-binding site is contributed by H119. Residue H119 participates in isopentenyl diphosphate binding. E121 functions as the Proton donor in the catalytic mechanism. T151 serves as a coordination point for (2E)-4-hydroxy-3-methylbut-2-enyl diphosphate. C181 is a binding site for [4Fe-4S] cluster. 4 residues coordinate (2E)-4-hydroxy-3-methylbut-2-enyl diphosphate: S209, S210, N211, and S251. Dimethylallyl diphosphate contacts are provided by S209, S210, N211, and S251. Isopentenyl diphosphate-binding residues include S209, S210, N211, and S251.

Belongs to the IspH family. The cofactor is [4Fe-4S] cluster.

It catalyses the reaction isopentenyl diphosphate + 2 oxidized [2Fe-2S]-[ferredoxin] + H2O = (2E)-4-hydroxy-3-methylbut-2-enyl diphosphate + 2 reduced [2Fe-2S]-[ferredoxin] + 2 H(+). The enzyme catalyses dimethylallyl diphosphate + 2 oxidized [2Fe-2S]-[ferredoxin] + H2O = (2E)-4-hydroxy-3-methylbut-2-enyl diphosphate + 2 reduced [2Fe-2S]-[ferredoxin] + 2 H(+). Its pathway is isoprenoid biosynthesis; dimethylallyl diphosphate biosynthesis; dimethylallyl diphosphate from (2E)-4-hydroxy-3-methylbutenyl diphosphate: step 1/1. The protein operates within isoprenoid biosynthesis; isopentenyl diphosphate biosynthesis via DXP pathway; isopentenyl diphosphate from 1-deoxy-D-xylulose 5-phosphate: step 6/6. Catalyzes the conversion of 1-hydroxy-2-methyl-2-(E)-butenyl 4-diphosphate (HMBPP) into a mixture of isopentenyl diphosphate (IPP) and dimethylallyl diphosphate (DMAPP). Acts in the terminal step of the DOXP/MEP pathway for isoprenoid precursor biosynthesis. The polypeptide is 4-hydroxy-3-methylbut-2-enyl diphosphate reductase (Thermotoga maritima (strain ATCC 43589 / DSM 3109 / JCM 10099 / NBRC 100826 / MSB8)).